The primary structure comprises 212 residues: Imidazole glycerol phosphate synthase subunit HisH (212 aa).

The region spanning 3–212 is the Glutamine amidotransferase type-1 domain; it reads TVAVIDYGMG…QNFAAWDGRW (210 aa). C81 functions as the Nucleophile in the catalytic mechanism. Active-site residues include H190 and E192.

Heterodimer of HisH and HisF.

The protein localises to the cytoplasm. The enzyme catalyses 5-[(5-phospho-1-deoxy-D-ribulos-1-ylimino)methylamino]-1-(5-phospho-beta-D-ribosyl)imidazole-4-carboxamide + L-glutamine = D-erythro-1-(imidazol-4-yl)glycerol 3-phosphate + 5-amino-1-(5-phospho-beta-D-ribosyl)imidazole-4-carboxamide + L-glutamate + H(+). The catalysed reaction is L-glutamine + H2O = L-glutamate + NH4(+). The protein operates within amino-acid biosynthesis; L-histidine biosynthesis; L-histidine from 5-phospho-alpha-D-ribose 1-diphosphate: step 5/9. Functionally, IGPS catalyzes the conversion of PRFAR and glutamine to IGP, AICAR and glutamate. The HisH subunit catalyzes the hydrolysis of glutamine to glutamate and ammonia as part of the synthesis of IGP and AICAR. The resulting ammonia molecule is channeled to the active site of HisF. This chain is Imidazole glycerol phosphate synthase subunit HisH, found in Pseudomonas syringae pv. syringae (strain B728a).